We begin with the raw amino-acid sequence, 45 residues long: Large ribosomal subunit protein bL34 (45 aa).

This sequence belongs to the bacterial ribosomal protein bL34 family.

This Beutenbergia cavernae (strain ATCC BAA-8 / DSM 12333 / CCUG 43141 / JCM 11478 / NBRC 16432 / NCIMB 13614 / HKI 0122) protein is Large ribosomal subunit protein bL34.